Here is a 100-residue protein sequence, read N- to C-terminus: Co-chaperonin GroES (100 aa).

This sequence belongs to the GroES chaperonin family. Heptamer of 7 subunits arranged in a ring. Interacts with the chaperonin GroEL.

The protein resides in the cytoplasm. Together with the chaperonin GroEL, plays an essential role in assisting protein folding. The GroEL-GroES system forms a nano-cage that allows encapsulation of the non-native substrate proteins and provides a physical environment optimized to promote and accelerate protein folding. GroES binds to the apical surface of the GroEL ring, thereby capping the opening of the GroEL channel. This is Co-chaperonin GroES from Nocardia farcinica (strain IFM 10152).